Consider the following 389-residue polypeptide: Tyrosinase-like protein phomQ1 (389 aa).

The helical transmembrane segment at 53 to 73 (TIIVVSVITFAAIIGCWVFLS) threads the bilayer. Cu cation contacts are provided by H141 and H150. An N-linked (GlcNAc...) asparagine glycan is attached at N220. Positions 290 and 316 each coordinate Cu cation.

It belongs to the tyrosinase family. Cu(2+) is required as a cofactor.

Its subcellular location is the membrane. Its pathway is mycotoxin biosynthesis. Tyrosinase-like protein; part of the gene cluster that mediates the biosynthesis of the phomopsins, a group of hexapeptide mycotoxins which infects lupins and causes lupinosis disease in livestock. Within the pathway, phomQ1 functions as a halogenase, converting. The pathway starts with the processing of the precursor phomA by several endopeptidases including kexin proteases as well as the cluster-specific S41 family peptidase phomP1 and the oligopeptidase phomG to produce 10 identical copies of the hexapeptide Tyr-Val-Ile-Pro-Ile-Asp. After being excised from the precursor peptide, the core peptides are cyclized and modified post-translationally by enzymes encoded within the gene cluster. The timing and order of proteolysis of the phomA precursor and PTMs are still unknown. Two tyrosinase-like enzymes, phomQ1 and phomQ2, catalyze the chlorination and hydroxylation of Tyr, respectively. PhomYb, is proposed to be involved in the construction of the macrocyclic structure. The other 4 ustYa family proteins may be involved in PTMs that generate the unique structure of phomopsin A. PhomYa is required for the hydroxylation of C-beta of Tyr. PhomYc, phomYd, and phomYe are responsible for the biosynthesis of 2,3-dehydroisoleucine (dIle), 2,3-dehydroaspartic acid (dAsp), and 3,4-dehydroproline (dPro), respectively. While dIle formation by phomYc is indispensable for the installation of dAsp by phomYd, the order of the other PTMs have not been elucidated yet. Most of the biosynthetic enzymes likely have broad substrate specificity, and thus, there might be a metabolic grid from a precursor to phomopsin A. The enzyme(s) responsible for the biosynthesis of 3,4-dehydrovaline (dVal) have also not been identified yet. Finally, phomM acts as an S-adenosylmethionine-dependent alpha-N-methyltransferase that catalyzes two successive N-methylation reactions, converting N-desmethyl-phomopsin A to phomopsin A and phomopsin A further to an N,N-dimethylated congener called phomopsin E. The polypeptide is Tyrosinase-like protein phomQ1 (Diaporthe leptostromiformis (Lupinosis disease fungus)).